A 359-amino-acid polypeptide reads, in one-letter code: Phosphate acyltransferase (359 aa).

The interval 337–359 (AAGAAQPAPETEVPGAHPSPHVA) is disordered.

This sequence belongs to the PlsX family. Homodimer. Probably interacts with PlsY.

The protein resides in the cytoplasm. The enzyme catalyses a fatty acyl-[ACP] + phosphate = an acyl phosphate + holo-[ACP]. The protein operates within lipid metabolism; phospholipid metabolism. In terms of biological role, catalyzes the reversible formation of acyl-phosphate (acyl-PO(4)) from acyl-[acyl-carrier-protein] (acyl-ACP). This enzyme utilizes acyl-ACP as fatty acyl donor, but not acyl-CoA. This chain is Phosphate acyltransferase, found in Cupriavidus necator (strain ATCC 17699 / DSM 428 / KCTC 22496 / NCIMB 10442 / H16 / Stanier 337) (Ralstonia eutropha).